Here is a 79-residue protein sequence, read N- to C-terminus: Cytochrome c oxidase assembly factor 6 homolog (79 aa).

Residues 9-52 (RQACWGARDEYWKCLDENTEDASKCKKLRSSFESSCPQQWIKYF) enclose the CHCH domain. The short motif at 12 to 22 (CWGARDEYWKC) is the Cx9C motif element. Intrachain disulfides connect C12-C44 and C22-C33. Positions 33-44 (CKKLRSSFESSC) match the Cx10C motif motif.

The protein belongs to the cytochrome c oxidase subunit 6B family. Found in a complex with TMEM177, COX20, MT-CO2/COX2, COX18, SCO1 and SCO2. Interacts with COA1, MT-CO2/COX2, SCO1, SCO2 and COX20. Interacts with COX20 in a MT-CO2/COX2- and COX18-dependent manner. Interacts with COX16.

Its subcellular location is the mitochondrion intermembrane space. In terms of biological role, involved in the maturation of the mitochondrial respiratory chain complex IV subunit MT-CO2/COX2. Thereby, may regulate early steps of complex IV assembly. Mitochondrial respiratory chain complex IV or cytochrome c oxidase is the component of the respiratory chain that catalyzes the transfer of electrons from intermembrane space cytochrome c to molecular oxygen in the matrix and as a consequence contributes to the proton gradient involved in mitochondrial ATP synthesis. May also be required for efficient formation of respiratory supercomplexes comprised of complexes III and IV. The sequence is that of Cytochrome c oxidase assembly factor 6 homolog (COA6) from Bos taurus (Bovine).